The following is a 1531-amino-acid chain: La-related protein Larp4B (1531 aa).

Residues 112–147 are compositionally biased toward low complexity; sequence HTHVAHQQQQQQQQQTIQQHLHQQQQQQSPHPAQHL. Disordered regions lie at residues 112–148 and 239–263; these read HTHV…QHLT and QLPA…EPNI. An HTH La-type RNA-binding domain is found at 262 to 351; the sequence is NIPLDKLKQM…RPNRKRCIII (90 aa). Residues 348-423 form the RRM domain; it reads CIIILREISN…KPIMARIKPK (76 aa). 6 disordered regions span residues 533 to 605, 710 to 736, 748 to 768, 791 to 1135, 1160 to 1211, and 1251 to 1285; these read PLPP…QGGN, AHSH…ASSS, TAPA…QQTQ, QEAG…SNQQ, DVVR…TPAL, and ASSK…QPSQ. The segment covering 565 to 578 has biased composition (low complexity); sequence YNNNHRGNPNNVGG. 2 stretches are compositionally biased toward low complexity: residues 754–768 and 810–826; these read QPGQ…QQTQ and SSNM…TSMS. Residues 860–884 are compositionally biased toward polar residues; sequence SSPSNPHPQQHLMSSSTGSNVQSAG. Residues 945–959 show a composition bias toward low complexity; the sequence is ALSSQQQQHHLTTGT. Positions 966–975 are enriched in basic residues; the sequence is HHYHHHHHHN. Positions 983 to 1004 are enriched in gly residues; sequence NSGGLGVSSGGSGGGGSGGGSG. A compositionally biased stretch (low complexity) spans 1031-1045; that stretch reads HQQQQQQQQQQQQQQ. Residues 1068–1086 are compositionally biased toward polar residues; that stretch reads TSATAPHTPQATGGASLHN. A compositionally biased stretch (low complexity) spans 1087–1115; it reads STTSSSSSTGLGQKQTLHQQQQQAPQQHQ. Ser-1123 carries the post-translational modification Phosphoserine. Gly residues predominate over residues 1164 to 1173; it reads TGGGGGGGGK. The span at 1183 to 1200 shows a compositional bias: polar residues; it reads PQGQNQPHMAPNYQQHQP. Basic and acidic residues predominate over residues 1270–1280; it reads KSNKTEDEMHP. A phosphoserine mark is found at Ser-1370 and Ser-1413. Disordered regions lie at residues 1393–1418 and 1450–1531; these read KAAA…TGSH and GGAS…ANNS. Polar residues-rich tracts occupy residues 1467-1477 and 1502-1515; these read ATNTTQGSSAV and QHYG…TNAN.

Functionally, probable RNA binding protein. Negatively regulates myc at the protein level, via an unknown mechanism, and may therefore have a role in growth. Has no effect on myc mRNA levels. The protein is La-related protein Larp4B of Drosophila melanogaster (Fruit fly).